A 320-amino-acid polypeptide reads, in one-letter code: Acetyl-coenzyme A carboxylase carboxyl transferase subunit beta (320 aa).

Positions 25–294 constitute a CoA carboxyltransferase N-terminal domain; the sequence is VWTKCDSCGQ…AKDEDELLGE (270 aa). Zn(2+)-binding residues include cysteine 29, cysteine 32, cysteine 48, and cysteine 51. The C4-type zinc finger occupies 29–51; it reads CDSCGQVLYRAELERNLEVCPKC. Residues 295–310 are compositionally biased toward acidic residues; the sequence is EMIADDIESSDNEPEI. Residues 295–320 are disordered; the sequence is EMIADDIESSDNEPEINIETNKKEDV.

It belongs to the AccD/PCCB family. In terms of assembly, acetyl-CoA carboxylase is a heterohexamer composed of biotin carboxyl carrier protein (AccB), biotin carboxylase (AccC) and two subunits each of ACCase subunit alpha (AccA) and ACCase subunit beta (AccD). The cofactor is Zn(2+).

It localises to the cytoplasm. It catalyses the reaction N(6)-carboxybiotinyl-L-lysyl-[protein] + acetyl-CoA = N(6)-biotinyl-L-lysyl-[protein] + malonyl-CoA. The protein operates within lipid metabolism; malonyl-CoA biosynthesis; malonyl-CoA from acetyl-CoA: step 1/1. In terms of biological role, component of the acetyl coenzyme A carboxylase (ACC) complex. Biotin carboxylase (BC) catalyzes the carboxylation of biotin on its carrier protein (BCCP) and then the CO(2) group is transferred by the transcarboxylase to acetyl-CoA to form malonyl-CoA. The sequence is that of Acetyl-coenzyme A carboxylase carboxyl transferase subunit beta from Proteus mirabilis (strain HI4320).